A 572-amino-acid polypeptide reads, in one-letter code: Urease subunit alpha (572 aa).

The 437-residue stretch at 136 to 572 folds into the Urease domain; it reads GGIDTHIHFI…VPLGQRYFLF (437 aa). Histidine 141, histidine 143, and lysine 224 together coordinate Ni(2+). Position 224 is an N6-carboxylysine (lysine 224). Histidine 226 provides a ligand contact to substrate. Positions 253 and 279 each coordinate Ni(2+). Histidine 327 acts as the Proton donor in catalysis. Aspartate 367 serves as a coordination point for Ni(2+).

The protein belongs to the metallo-dependent hydrolases superfamily. Urease alpha subunit family. Heterotrimer of UreA (gamma), UreB (beta) and UreC (alpha) subunits. Three heterotrimers associate to form the active enzyme. Requires Ni cation as cofactor. In terms of processing, carboxylation allows a single lysine to coordinate two nickel ions.

The protein resides in the cytoplasm. The enzyme catalyses urea + 2 H2O + H(+) = hydrogencarbonate + 2 NH4(+). The protein operates within nitrogen metabolism; urea degradation; CO(2) and NH(3) from urea (urease route): step 1/1. The polypeptide is Urease subunit alpha (Haemophilus influenzae (strain ATCC 51907 / DSM 11121 / KW20 / Rd)).